Reading from the N-terminus, the 224-residue chain is PKHD-type hydroxylase Sbal195_0750 (224 aa).

The 99-residue stretch at 78–176 (QFYPPLFNRY…RTAAFMWLQS (99 aa)) folds into the Fe2OG dioxygenase domain. Fe cation contacts are provided by H96, D98, and H157. 2-oxoglutarate is bound at residue R167.

The cofactor is Fe(2+). L-ascorbate is required as a cofactor.

This is PKHD-type hydroxylase Sbal195_0750 from Shewanella baltica (strain OS195).